The chain runs to 102 residues: Small ribosomal subunit protein uS10 (102 aa).

This sequence belongs to the universal ribosomal protein uS10 family. Part of the 30S ribosomal subunit.

In terms of biological role, involved in the binding of tRNA to the ribosomes. The protein is Small ribosomal subunit protein uS10 of Geobacter sulfurreducens (strain ATCC 51573 / DSM 12127 / PCA).